The sequence spans 505 residues: Maturase K (505 aa).

It belongs to the intron maturase 2 family. MatK subfamily.

Its subcellular location is the plastid. It is found in the chloroplast. In terms of biological role, usually encoded in the trnK tRNA gene intron. Probably assists in splicing its own and other chloroplast group II introns. This Allamanda cathartica (Yellow allamanda) protein is Maturase K.